We begin with the raw amino-acid sequence, 291 residues long: Transcription initiation factor IIE subunit beta (291 aa).

Residue Met-1 is modified to N-acetylmethionine. Positions 1–13 (MDPSLLRERELFK) are enriched in basic and acidic residues. A disordered region spans residues 1–63 (MDPSLLRERE…NSDHSNGSFN (63 aa)). Residues 50-62 (GSKQNSDHSNGSF) show a composition bias toward polar residues. Ser-61 carries the post-translational modification Phosphoserine. Residues 66-146 (ALSGSSGYKF…YAFKPKYNVR (81 aa)) constitute a DNA-binding region (TFIIE beta). Position 74 is an N6-acetyllysine (Lys-74). The segment at 243 to 272 (SSMQESGPKKVAPIQRRKKPASQKKRRFKT) is disordered. The segment covering 257–271 (QRRKKPASQKKRRFK) has biased composition (basic residues).

It belongs to the TFIIE beta subunit family. In terms of assembly, tetramer of two alpha and two beta chains. Interacts with FACT subunit SUPT16H. Interacts with ATF7IP. Interacts with SND1. Part of TBP-based Pol II pre-initiation complex (PIC), in which Pol II core assembles with general transcription factors and other specific initiation factors including GTF2E1, GTF2E2, GTF2F1, GTF2F2, TCEA1, ERCC2, ERCC3, GTF2H2, GTF2H3, GTF2H4, GTF2H5, GTF2A1, GTF2A2, GTF2B and TBP; this large multi-subunit PIC complex mediates DNA unwinding and targets Pol II core to the transcription start site where the first phosphodiester bond forms.

The protein resides in the nucleus. Recruits TFIIH to the initiation complex and stimulates the RNA polymerase II C-terminal domain kinase and DNA-dependent ATPase activities of TFIIH. Both TFIIH and TFIIE are required for promoter clearance by RNA polymerase. This is Transcription initiation factor IIE subunit beta (GTF2E2) from Homo sapiens (Human).